The sequence spans 2036 residues: Ral GTPase-activating protein subunit alpha-1 (2036 aa).

Disordered regions lie at residues Leu343–Cys384 and Glu476–Ser497. Positions Ser345–Gln365 are enriched in basic and acidic residues. 2 stretches are compositionally biased toward polar residues: residues Ser366–Cys384 and Gly486–Ser497. Phosphoserine occurs at positions 711 and 721. The tract at residues Ser715 to Lys753 is disordered. Thr754 carries the post-translational modification Phosphothreonine. A Phosphoserine modification is found at Ser773. A Phosphothreonine modification is found at Thr778. Phosphoserine occurs at positions 797, 860, 861, and 864. Disordered stretches follow at residues Ser849–His910 and Thr982–Asn1009. Positions Gly850 to Gly863 are enriched in polar residues. Low complexity predominate over residues Ser895–His910. The segment covering Ile983–Asn1009 has biased composition (polar residues). Phosphoserine occurs at positions 986, 990, 994, and 1000. A Phosphothreonine modification is found at Thr1002. Ser1004 and Ser1478 each carry phosphoserine. The segment at Phe1327 to Asp2035 is minimal domain that binds to TCF3/E12. Residues Lys1716 to Asn1744 are a coiled coil. Residues Leu1796–Ile2004 enclose the Rap-GAP domain.

Component of the heterodimeric RalGAP1 complex with RALGAPB. Heterodimerization is required for activity. Interacts with the HLH region of TCF3/isoform E12. As to expression, widely expressed.

The protein localises to the cytoplasm. The protein resides in the nucleus. In terms of biological role, catalytic subunit of the heterodimeric RalGAP1 complex which acts as a GTPase activator for the Ras-like small GTPases RALA and RALB. The protein is Ral GTPase-activating protein subunit alpha-1 (RALGAPA1) of Homo sapiens (Human).